Consider the following 606-residue polypeptide: Protein spire homolog 2 (606 aa).

A KIND domain is found at 21-219 (LSLEEVLKSY…RALFLETLEL (199 aa)). Residues 147–181 (KHCGSNAAKDEGYSGQDEEEEEEEEEEEEGAGRGI) form a disordered region. Over residues 162–175 (QDEEEEEEEEEEEE) the composition is skewed to acidic residues. WH2 domains lie at 263–277 (QLMK…LKKV) and 357–374 (LHDR…LRPV). Disordered stretches follow at residues 438-464 (DEDS…RSFS) and 517-537 (CRSL…ASHG). Over residues 445–464 (VDMRRVESSPTPLKRDRSFS) the composition is skewed to basic and acidic residues. The spir-box stretch occupies residues 554-574 (LALTVDGVINVRRILVKAEME).

This sequence belongs to the spire family.

It localises to the cytoplasm. The protein resides in the cytoskeleton. It is found in the cytosol. The protein localises to the cell membrane. Its subcellular location is the cytoplasmic vesicle membrane. Acts as an actin nucleation factor, remains associated with the slow-growing pointed end of the new filament. Involved in intracellular vesicle transport along actin fibers, providing a novel link between actin cytoskeleton dynamics and intracellular transport. Required for asymmetric spindle positioning and asymmetric cell division during oocyte meiosis. Required for normal formation of the cleavage furrow and for polar body extrusion during female germ cell meiosis. Also acts in the nucleus: together with SPIRE1 and SPIRE2, promotes assembly of nuclear actin filaments in response to DNA damage in order to facilitate movement of chromatin and repair factors after DNA damage. The protein is Protein spire homolog 2 (spire2) of Danio rerio (Zebrafish).